Reading from the N-terminus, the 361-residue chain is Phosphoserine aminotransferase (361 aa).

R43 lines the L-glutamate pocket. Residues 77-78 (AS), W103, T153, D173, and Q196 each bind pyridoxal 5'-phosphate. Residue K197 is modified to N6-(pyridoxal phosphate)lysine. Residue 238-239 (NT) coordinates pyridoxal 5'-phosphate.

It belongs to the class-V pyridoxal-phosphate-dependent aminotransferase family. SerC subfamily. Homodimer. The cofactor is pyridoxal 5'-phosphate.

Its subcellular location is the cytoplasm. It catalyses the reaction O-phospho-L-serine + 2-oxoglutarate = 3-phosphooxypyruvate + L-glutamate. It carries out the reaction 4-(phosphooxy)-L-threonine + 2-oxoglutarate = (R)-3-hydroxy-2-oxo-4-phosphooxybutanoate + L-glutamate. Its pathway is amino-acid biosynthesis; L-serine biosynthesis; L-serine from 3-phospho-D-glycerate: step 2/3. It participates in cofactor biosynthesis; pyridoxine 5'-phosphate biosynthesis; pyridoxine 5'-phosphate from D-erythrose 4-phosphate: step 3/5. Catalyzes the reversible conversion of 3-phosphohydroxypyruvate to phosphoserine and of 3-hydroxy-2-oxo-4-phosphonooxybutanoate to phosphohydroxythreonine. This chain is Phosphoserine aminotransferase, found in Pseudomonas paraeruginosa (strain DSM 24068 / PA7) (Pseudomonas aeruginosa (strain PA7)).